A 515-amino-acid polypeptide reads, in one-letter code: Lysosomal acid glucosylceramidase (515 aa).

Positions 1 to 19 (MAARLIGFFLFQAVSWAYG) are cleaved as a signal peptide. Intrachain disulfides connect Cys23/Cys35 and Cys37/Cys42. Residues Asn38 and Asn78 are each glycosylated (N-linked (GlcNAc...) asparagine). A glycan (N-linked (GlcNAc...) (high mannose) asparagine) is linked at Asn165. The Proton donor role is filled by Glu254. Asn289 carries an N-linked (GlcNAc...) asparagine glycan. Glu358 (nucleophile) is an active-site residue. The N-linked (GlcNAc...) asparagine glycan is linked to Asn480.

It belongs to the glycosyl hydrolase 30 family. In terms of assembly, interacts with saposin-C. Interacts with SCARB2. Interacts with TCP1. Interacts with GRN; this interaction prevents aggregation of GBA1-SCARB2 complex via interaction with HSPA1A upon stress.

It is found in the lysosome membrane. The enzyme catalyses a beta-D-glucosyl-(1&lt;-&gt;1')-N-acylsphing-4-enine + H2O = an N-acylsphing-4-enine + D-glucose. It catalyses the reaction a beta-D-galactosyl-(1&lt;-&gt;1')-N-acylsphing-4-enine + H2O = an N-acylsphing-4-enine + D-galactose. The catalysed reaction is cholesteryl 3-beta-D-glucoside + H2O = cholesterol + D-glucose. It carries out the reaction a beta-D-glucosyl-(1&lt;-&gt;1')-N-acylsphing-4-enine + cholesterol = cholesteryl 3-beta-D-glucoside + an N-acylsphing-4-enine. The enzyme catalyses beta-D-glucosyl-(1&lt;-&gt;1')-N-hexadecanoylsphing-4-enine + cholesterol = cholesteryl 3-beta-D-glucoside + N-hexadecanoylsphing-4-enine. It catalyses the reaction beta-D-glucosyl-N-(9Z-octadecenoyl)-sphing-4E-enine + cholesterol = N-(9Z-octadecenoyl)-sphing-4-enine + cholesteryl 3-beta-D-glucoside. The catalysed reaction is beta-D-glucosyl-N-octanoylsphing-4E-enine + cholesterol = N-octanoylsphing-4-enine + cholesteryl 3-beta-D-glucoside. It carries out the reaction beta-D-glucosyl-N-dodecanoylsphing-4-enine + cholesterol = N-dodecanoylsphing-4-enine + cholesteryl 3-beta-D-glucoside. The enzyme catalyses beta-D-glucosyl-(1&lt;-&gt;1)-N-octadecanoylsphing-4-enine + cholesterol = N-octadecanoylsphing-4-enine + cholesteryl 3-beta-D-glucoside. It catalyses the reaction beta-D-glucosyl-(1&lt;-&gt;1')-N-(15Z-tetracosenoyl)-sphing-4-enine + cholesterol = N-(15Z-tetracosenoyl)-sphing-4-enine + cholesteryl 3-beta-D-glucoside. The catalysed reaction is a beta-D-galactosyl-(1&lt;-&gt;1')-N-acylsphing-4-enine + cholesterol = cholesteryl 3-beta-D-galactoside + an N-acylsphing-4-enine. It carries out the reaction 1-(beta-D-galactosyl)-N-dodecanoylsphing-4-enine + cholesterol = cholesteryl 3-beta-D-galactoside + N-dodecanoylsphing-4-enine. The enzyme catalyses a beta-D-xylosyl-(1&lt;-&gt;1')-N-acylsphing-4-enine + cholesterol = cholesteryl 3-beta-D-xyloside + an N-acylsphing-4-enine. It catalyses the reaction beta-D-xylosyl-(1&lt;-&gt;1')-N-(9Z-octadecenoyl)-sphing-4-enine + cholesterol = cholesteryl 3-beta-D-xyloside + N-(9Z-octadecenoyl)-sphing-4-enine. It participates in steroid metabolism; cholesterol metabolism. The protein operates within sphingolipid metabolism. Inhibited by conduritol B epoxide/CBE. Functionally, glucosylceramidase that catalyzes, within the lysosomal compartment, the hydrolysis of glucosylceramides/GlcCers (such as beta-D-glucosyl-(1&lt;-&gt;1')-N-acylsphing-4-enine) into free ceramides (such as N-acylsphing-4-enine) and glucose. Plays a central role in the degradation of complex lipids and the turnover of cellular membranes. Through the production of ceramides, participates in the PKC-activated salvage pathway of ceramide formation. Catalyzes the glucosylation of cholesterol, through a transglucosylation reaction where glucose is transferred from GlcCer to cholesterol. GlcCer containing mono-unsaturated fatty acids (such as beta-D-glucosyl-N-(9Z-octadecenoyl)-sphing-4-enine) are preferred as glucose donors for cholesterol glucosylation when compared with GlcCer containing same chain length of saturated fatty acids (such as beta-D-glucosyl-N-octadecanoyl-sphing-4-enine). Under specific conditions, may alternatively catalyze the reverse reaction, transferring glucose from cholesteryl 3-beta-D-glucoside to ceramide. Can also hydrolyze cholesteryl 3-beta-D-glucoside producing glucose and cholesterol. Catalyzes the hydrolysis of galactosylceramides/GalCers (such as beta-D-galactosyl-(1&lt;-&gt;1')-N-acylsphing-4-enine), as well as the transfer of galactose between GalCers and cholesterol in vitro, but with lower activity than with GlcCers. Contrary to GlcCer and GalCer, xylosylceramide/XylCer (such as beta-D-xyosyl-(1&lt;-&gt;1')-N-acylsphing-4-enine) is not a good substrate for hydrolysis, however it is a good xylose donor for transxylosylation activity to form cholesteryl 3-beta-D-xyloside. The sequence is that of Lysosomal acid glucosylceramidase (Gba1) from Mus musculus (Mouse).